A 185-amino-acid chain; its full sequence is Ribosome-recycling factor (185 aa).

The protein belongs to the RRF family.

It is found in the cytoplasm. Functionally, responsible for the release of ribosomes from messenger RNA at the termination of protein biosynthesis. May increase the efficiency of translation by recycling ribosomes from one round of translation to another. The sequence is that of Ribosome-recycling factor from Nocardioides sp. (strain ATCC BAA-499 / JS614).